Reading from the N-terminus, the 617-residue chain is Elongation factor 4 (617 aa).

The tr-type G domain occupies 17-203; the sequence is ERIRNFCIIA…RVCELVPHPV (187 aa). Residues 29 to 34 and 150 to 153 each bind GTP; these read DHGKST and NKID.

Belongs to the TRAFAC class translation factor GTPase superfamily. Classic translation factor GTPase family. LepA subfamily.

It is found in the cell membrane. It catalyses the reaction GTP + H2O = GDP + phosphate + H(+). Its function is as follows. Required for accurate and efficient protein synthesis under certain stress conditions. May act as a fidelity factor of the translation reaction, by catalyzing a one-codon backward translocation of tRNAs on improperly translocated ribosomes. Back-translocation proceeds from a post-translocation (POST) complex to a pre-translocation (PRE) complex, thus giving elongation factor G a second chance to translocate the tRNAs correctly. Binds to ribosomes in a GTP-dependent manner. The polypeptide is Elongation factor 4 (Corynebacterium urealyticum (strain ATCC 43042 / DSM 7109)).